Reading from the N-terminus, the 594-residue chain is Potassium-transporting ATPase potassium-binding subunit (594 aa).

12 consecutive transmembrane segments (helical) span residues 4–24, 65–85, 136–156, 179–199, 287–307, 314–334, 361–381, 390–410, 413–433, 450–470, 518–538, and 560–580; these read QFFGLLVFYLAILLILAPFLG, QYAVAVLIFSVLGFIAVYALQ, ALTVQNFLSAAVGMSVLFALI, LYVLLPLALALALALVSQGVI, LEMLAILIIPAALCFTFGEMV, VAILAAMTLLFVGLAWLTQNA, FGVAASALFAVVTTAASCGAV, AMGGLGPMLLMQLGEVVFGGV, GLYGMLAFALLGVFIAGLMIG, MVSIAILVTPFLVLAGTALAV, LLGLAMWFGRFLVIVAILALA, and LFIVLLIGTVLLVGALTYVPA.

This sequence belongs to the KdpA family. As to quaternary structure, the system is composed of three essential subunits: KdpA, KdpB and KdpC.

The protein resides in the cell inner membrane. In terms of biological role, part of the high-affinity ATP-driven potassium transport (or Kdp) system, which catalyzes the hydrolysis of ATP coupled with the electrogenic transport of potassium into the cytoplasm. This subunit binds the periplasmic potassium ions and delivers the ions to the membrane domain of KdpB through an intramembrane tunnel. The polypeptide is Potassium-transporting ATPase potassium-binding subunit (Bordetella avium (strain 197N)).